Here is a 487-residue protein sequence, read N- to C-terminus: Betaine aldehyde dehydrogenase (487 aa).

Ser-26, Ile-27, and Asp-93 together coordinate K(+). Residue 150 to 152 (GAW) participates in NAD(+) binding. Lys-162 acts as the Charge relay system in catalysis. NAD(+) is bound by residues 176–179 (KPSE) and 229–232 (SVPT). Leu-244 is a K(+) binding site. Glu-250 (proton acceptor) is an active-site residue. Positions 252, 284, and 384 each coordinate NAD(+). Cys-284 functions as the Nucleophile in the catalytic mechanism. Cys-284 carries the cysteine sulfenic acid (-SOH) modification. Positions 454 and 457 each coordinate K(+). The active-site Charge relay system is the Glu-461.

Belongs to the aldehyde dehydrogenase family. As to quaternary structure, dimer of dimers. K(+) serves as cofactor.

It catalyses the reaction betaine aldehyde + NAD(+) + H2O = glycine betaine + NADH + 2 H(+). The protein operates within amine and polyamine biosynthesis; betaine biosynthesis via choline pathway; betaine from betaine aldehyde: step 1/1. Functionally, involved in the biosynthesis of the osmoprotectant glycine betaine. Catalyzes the irreversible oxidation of betaine aldehyde to the corresponding acid. This chain is Betaine aldehyde dehydrogenase, found in Sinorhizobium fredii (strain NBRC 101917 / NGR234).